The following is a 395-amino-acid chain: uncharacterized protein (395 aa).

The tract at residues 115–144 is disordered; that stretch reads TKPPTEGGPEKDQSSPSQTQAAPQGPSTAS. Residues 128 to 141 are compositionally biased toward low complexity; the sequence is SSPSQTQAAPQGPS.

This is an uncharacterized protein from Homo sapiens (Human).